Consider the following 1101-residue polypeptide: Translation initiation factor IF-2 (1101 aa).

Disordered regions lie at residues 81-437 (QEIL…EDDF) and 452-509 (SIST…QRAE). The span at 93 to 108 (PFSSTDAPVGSGQSSP) shows a compositional bias: polar residues. The segment covering 110-124 (IEPPRPPMKPQPPSP) has biased composition (pro residues). Composition is skewed to polar residues over residues 128–149 (EVTS…GSSS) and 157–184 (SPMS…QLKY). Positions 185 to 196 (NQEQSNQLEQES) are enriched in low complexity. The span at 197–206 (AISSELSEVN) shows a compositional bias: polar residues. Composition is skewed to basic and acidic residues over residues 228–237 (SKEKEAKSNE), 248–288 (KENK…DKKS), and 295–340 (VKRE…ELKR). Residues 361–378 (EPEDVEDTAEDLLEEDPL) are compositionally biased toward acidic residues. Composition is skewed to basic residues over residues 385–397 (PKLK…KVGK) and 414–428 (KAGK…KRRQ). A compositionally biased stretch (basic and acidic residues) spans 484–506 (EPGRGKSAERERSERKDRKEQPQ). The tr-type G domain occupies 592–765 (RRPPVVTIMG…LLVAEVGELS (174 aa)). The G1 stretch occupies residues 601-608 (GHVDHGKT). 601-608 (GHVDHGKT) serves as a coordination point for GTP. The interval 626 to 630 (GITQH) is G2. Positions 651–654 (DTPG) are G3. Residues 651–655 (DTPGH) and 705–708 (NKID) contribute to the GTP site. A G4 region spans residues 705–708 (NKID). The tract at residues 741–743 (SAL) is G5.

The protein belongs to the TRAFAC class translation factor GTPase superfamily. Classic translation factor GTPase family. IF-2 subfamily.

Its subcellular location is the cytoplasm. Its function is as follows. One of the essential components for the initiation of protein synthesis. Protects formylmethionyl-tRNA from spontaneous hydrolysis and promotes its binding to the 30S ribosomal subunits. Also involved in the hydrolysis of GTP during the formation of the 70S ribosomal complex. The polypeptide is Translation initiation factor IF-2 (Gloeothece citriformis (strain PCC 7424) (Cyanothece sp. (strain PCC 7424))).